Consider the following 207-residue polypeptide: Fibroblast growth factor 18 (207 aa).

Positions methionine 1–alanine 27 are cleaved as a signal peptide. N-linked (GlcNAc...) asparagine glycosylation is present at asparagine 39. Cysteines 109 and 127 form a disulfide. A glycan (N-linked (GlcNAc...) asparagine) is linked at asparagine 137.

This sequence belongs to the heparin-binding growth factors family. In terms of assembly, interacts with FGFR3 and FGFR4.

It localises to the secreted. Its function is as follows. Plays an important role in the regulation of cell proliferation, cell differentiation and cell migration. Required for normal ossification and bone development. Stimulates hepatic and intestinal proliferation. This chain is Fibroblast growth factor 18 (Fgf18), found in Mus musculus (Mouse).